The primary structure comprises 1377 residues: DNA-directed RNA polymerase subunit beta' (1377 aa).

Residues cysteine 60, cysteine 62, cysteine 75, and cysteine 78 each coordinate Zn(2+). The Mg(2+) site is built by aspartate 449, aspartate 451, and aspartate 453. Cysteine 777, cysteine 851, cysteine 858, and cysteine 861 together coordinate Zn(2+).

This sequence belongs to the RNA polymerase beta' chain family. In terms of assembly, the RNAP catalytic core consists of 2 alpha, 1 beta, 1 beta' and 1 omega subunit. When a sigma factor is associated with the core the holoenzyme is formed, which can initiate transcription. The cofactor is Mg(2+). Zn(2+) serves as cofactor.

The enzyme catalyses RNA(n) + a ribonucleoside 5'-triphosphate = RNA(n+1) + diphosphate. Functionally, DNA-dependent RNA polymerase catalyzes the transcription of DNA into RNA using the four ribonucleoside triphosphates as substrates. The sequence is that of DNA-directed RNA polymerase subunit beta' from Borreliella afzelii (strain PKo) (Borrelia afzelii).